A 748-amino-acid polypeptide reads, in one-letter code: Spidroin-1 (748 aa).

25 tandem repeats follow at residues 1 to 25, 26 to 38, 39 to 66, 67 to 96, 97 to 130, 131 to 158, 159 to 191, 192 to 204, 205 to 235, 236 to 262, 263 to 292, 293 to 305, 306 to 333, 334 to 360, 361 to 394, 395 to 424, 425 to 458, 459 to 485, 486 to 512, 513 to 525, 526 to 555, 556 to 582, 583 to 612, 613 to 642, and 643 to 655. The tract at residues 1 to 655 is 25 X approximate tandem repeats; the sequence is QGAGAAAAAA…ASAAASRLSS (655 aa).

The protein belongs to the silk fibroin family. In terms of assembly, major subunit, with spidroin 2, of the dragline silk.

It localises to the secreted. The protein resides in the extracellular space. Spiders' major ampullate silk possesses unique characteristics of strength and elasticity. Fibroin consists of pseudocrystalline regions of antiparallel beta-sheet interspersed with elastic amorphous segments. This chain is Spidroin-1, found in Trichonephila clavipes (Golden silk orbweaver).